We begin with the raw amino-acid sequence, 173 residues long: RNA pyrophosphohydrolase (173 aa).

A Nudix hydrolase domain is found at 6 to 149; the sequence is GFRANVGIIL…KRGVYRRALQ (144 aa). The Nudix box signature appears at 38–59; the sequence is GGIDRGETPMDAMYRELWEEVG.

This sequence belongs to the Nudix hydrolase family. RppH subfamily. A divalent metal cation is required as a cofactor.

Accelerates the degradation of transcripts by removing pyrophosphate from the 5'-end of triphosphorylated RNA, leading to a more labile monophosphorylated state that can stimulate subsequent ribonuclease cleavage. This Psychrobacter arcticus (strain DSM 17307 / VKM B-2377 / 273-4) protein is RNA pyrophosphohydrolase.